Consider the following 389-residue polypeptide: Urea transporter 1 (389 aa).

Transmembrane regions (helical) follow at residues 53–73 (PVVL…VFVN), 91–110 (WWAL…ALLL), 116–136 (LIAS…MAVF), 143–163 (FWWL…FSSA), and 173–193 (LPVF…ATGH). N-linked (GlcNAc...) asparagine glycosylation occurs at N211. Helical transmembrane passes span 242 to 262 (GGIF…HAAI), 281 to 301 (IYFG…GGMF), 310 to 330 (LLAL…ANFM), and 333 to 353 (VGLP…LIMT).

It belongs to the urea transporter family. As to quaternary structure, homotrimer; each subunit contains a pore through which urea permeates. Identified in a complex with STOM. As to expression, detected in erythrocytes (at protein level). Expressed in spleen erythroblasts and tumoral kidney.

Its subcellular location is the cell membrane. The protein localises to the basolateral cell membrane. It carries out the reaction urea(in) = urea(out). With respect to regulation, inhibited by phloretin and para-chloromercuribenzene sulfonate. Mediates the transport of urea driven by a concentration gradient across the cell membrane of erythrocytes. Also mediates the transport of urea across the cell membrane of the renal inner medullary collecting duct which is critical to the urinary concentrating mechanism. Facilitates water transport in erythrocytes. This is Urea transporter 1 (SLC14A1) from Homo sapiens (Human).